Here is a 1337-residue protein sequence, read N- to C-terminus: Sister chromatid cohesion protein PDS5 homolog A (1337 aa).

Residue methionine 1 is modified to N-acetylmethionine. An HEAT repeat occupies 393-429 (ALVNDQLLGFVRERTLDKRWRVRKEAMMGLAQLYKKY). A Phosphoserine modification is found at serine 1097. An N6-acetyllysine modification is found at lysine 1146. The disordered stretch occupies residues 1150-1337 (ATGRKPYVRS…PAERQIDLQR (188 aa)). Residues 1159–1180 (STGTETGSNINVNSELNPSTGN) show a composition bias toward polar residues. Residue serine 1195 is modified to Phosphoserine. Position 1208 is a phosphothreonine (threonine 1208). An N6-acetyllysine modification is found at lysine 1211. Polar residues predominate over residues 1223 to 1233 (SDQATQGNISS). An N6-acetyllysine modification is found at lysine 1290. Serine 1305 bears the Phosphoserine mark. Residues 1321–1337 (DLAKKAAPAERQIDLQR) are compositionally biased toward basic and acidic residues.

The protein belongs to the PDS5 family. Interacts with the cohesin complex. Interacts with WAPL (via FGF motifs) or CDCA5 (via the FGF motif); the interaction is direct, cohesin-dependent and competitive. Interacts with SMC3. Interacts with TP63. As to expression, highest level in colon. Low levels in lung, ovary, breast and kidney. Reduced level in renal tumor tissue. Isoform 2 is expressed in kidney.

The protein localises to the nucleus. In terms of biological role, probable regulator of sister chromatid cohesion in mitosis which may stabilize cohesin complex association with chromatin. May couple sister chromatid cohesion during mitosis to DNA replication. Cohesion ensures that chromosome partitioning is accurate in both meiotic and mitotic cells and plays an important role in DNA repair. This chain is Sister chromatid cohesion protein PDS5 homolog A, found in Homo sapiens (Human).